A 316-amino-acid chain; its full sequence is Ribosomal RNA small subunit methyltransferase H (316 aa).

Residues 32 to 34 (AGH), Asp-52, Phe-79, Asp-106, and Gln-113 each bind S-adenosyl-L-methionine.

The protein belongs to the methyltransferase superfamily. RsmH family.

The protein localises to the cytoplasm. The catalysed reaction is cytidine(1402) in 16S rRNA + S-adenosyl-L-methionine = N(4)-methylcytidine(1402) in 16S rRNA + S-adenosyl-L-homocysteine + H(+). Specifically methylates the N4 position of cytidine in position 1402 (C1402) of 16S rRNA. In Paenibacillus sp. (strain JDR-2), this protein is Ribosomal RNA small subunit methyltransferase H.